A 141-amino-acid chain; its full sequence is Large ribosomal subunit protein bL17 (141 aa).

This sequence belongs to the bacterial ribosomal protein bL17 family. In terms of assembly, part of the 50S ribosomal subunit. Contacts protein L32.

The sequence is that of Large ribosomal subunit protein bL17 from Agrobacterium fabrum (strain C58 / ATCC 33970) (Agrobacterium tumefaciens (strain C58)).